Consider the following 271-residue polypeptide: Formamidopyrimidine-DNA glycosylase (271 aa).

P2 serves as the catalytic Schiff-base intermediate with DNA. Residue E3 is the Proton donor of the active site. The active-site Proton donor; for beta-elimination activity is the K58. DNA-binding residues include R110 and R152. Residues 237 to 271 form an FPG-type zinc finger; sequence AVYGQTGKPCTVCGTPIARIRLGNRSTWFCPVCQK. Residue R261 is the Proton donor; for delta-elimination activity of the active site.

This sequence belongs to the FPG family. Monomer. The cofactor is Zn(2+).

The catalysed reaction is Hydrolysis of DNA containing ring-opened 7-methylguanine residues, releasing 2,6-diamino-4-hydroxy-5-(N-methyl)formamidopyrimidine.. The enzyme catalyses 2'-deoxyribonucleotide-(2'-deoxyribose 5'-phosphate)-2'-deoxyribonucleotide-DNA = a 3'-end 2'-deoxyribonucleotide-(2,3-dehydro-2,3-deoxyribose 5'-phosphate)-DNA + a 5'-end 5'-phospho-2'-deoxyribonucleoside-DNA + H(+). In terms of biological role, involved in base excision repair of DNA damaged by oxidation or by mutagenic agents. Acts as a DNA glycosylase that recognizes and removes damaged bases. Has a preference for oxidized purines, such as 7,8-dihydro-8-oxoguanine (8-oxoG). Has AP (apurinic/apyrimidinic) lyase activity and introduces nicks in the DNA strand. Cleaves the DNA backbone by beta-delta elimination to generate a single-strand break at the site of the removed base with both 3'- and 5'-phosphates. The polypeptide is Formamidopyrimidine-DNA glycosylase (Geobacter sulfurreducens (strain ATCC 51573 / DSM 12127 / PCA)).